We begin with the raw amino-acid sequence, 516 residues long: 2-isopropylmalate synthase (516 aa).

Residues 5 to 267 form the Pyruvate carboxyltransferase domain; the sequence is VIIFDTTLRD…TTGIKHDEIS (263 aa). Aspartate 14, histidine 202, histidine 204, and asparagine 238 together coordinate Mn(2+). A regulatory domain region spans residues 392-516; that stretch reads KLNYLSVQSG…IKQKKSVATV (125 aa).

It belongs to the alpha-IPM synthase/homocitrate synthase family. LeuA type 1 subfamily. Homodimer. Mn(2+) is required as a cofactor.

The protein resides in the cytoplasm. It catalyses the reaction 3-methyl-2-oxobutanoate + acetyl-CoA + H2O = (2S)-2-isopropylmalate + CoA + H(+). It participates in amino-acid biosynthesis; L-leucine biosynthesis; L-leucine from 3-methyl-2-oxobutanoate: step 1/4. In terms of biological role, catalyzes the condensation of the acetyl group of acetyl-CoA with 3-methyl-2-oxobutanoate (2-ketoisovalerate) to form 3-carboxy-3-hydroxy-4-methylpentanoate (2-isopropylmalate). The protein is 2-isopropylmalate synthase of Vibrio cholerae serotype O1 (strain ATCC 39315 / El Tor Inaba N16961).